We begin with the raw amino-acid sequence, 106 residues long: uncharacterized protein (106 aa).

Residues Ala85–Pro101 form a helical membrane-spanning segment.

Its subcellular location is the membrane. This is an uncharacterized protein from Saccharomyces cerevisiae (strain ATCC 204508 / S288c) (Baker's yeast).